The chain runs to 1405 residues: DNA-directed RNA polymerase subunit beta' (1405 aa).

Residues cysteine 70, cysteine 72, cysteine 85, and cysteine 88 each contribute to the Zn(2+) site. Aspartate 458, aspartate 460, and aspartate 462 together coordinate Mg(2+). Residues cysteine 813, cysteine 887, cysteine 894, and cysteine 897 each coordinate Zn(2+).

It belongs to the RNA polymerase beta' chain family. The RNAP catalytic core consists of 2 alpha, 1 beta, 1 beta' and 1 omega subunit. When a sigma factor is associated with the core the holoenzyme is formed, which can initiate transcription. The cofactor is Mg(2+). Zn(2+) serves as cofactor.

It carries out the reaction RNA(n) + a ribonucleoside 5'-triphosphate = RNA(n+1) + diphosphate. DNA-dependent RNA polymerase catalyzes the transcription of DNA into RNA using the four ribonucleoside triphosphates as substrates. In Albidiferax ferrireducens (strain ATCC BAA-621 / DSM 15236 / T118) (Rhodoferax ferrireducens), this protein is DNA-directed RNA polymerase subunit beta'.